A 164-amino-acid polypeptide reads, in one-letter code: UPF0304 protein YfbU (164 aa).

It belongs to the UPF0304 family.

The chain is UPF0304 protein YfbU from Shigella flexneri serotype 5b (strain 8401).